The primary structure comprises 113 residues: uncharacterized protein (113 aa).

Residues 4–26 form a helical membrane-spanning segment; sequence VLFKIAVALLYLLSFFLHRLHLR. Positions 32–74 are disordered; sequence RRRRRRHHRRHHRRHHHHRRRRRRRRRRRRRHHRHHHHRHRRR.

It localises to the membrane. This is an uncharacterized protein from Saccharomyces cerevisiae (strain ATCC 204508 / S288c) (Baker's yeast).